The sequence spans 167 residues: EF-hand calcium-binding domain-containing protein 11 (167 aa).

EF-hand domains are found at residues 17-52 (AERK…LFGY), 91-126 (DPYE…VAPR), and 127-162 (LQER…GLAN). Ca(2+)-binding residues include aspartate 140, aspartate 142, aspartate 144, histidine 146, and aspartate 151.

This is EF-hand calcium-binding domain-containing protein 11 (efcab11) from Danio rerio (Zebrafish).